The chain runs to 421 residues: NADH-quinone oxidoreductase subunit F (421 aa).

The segment at 1-25 (MLKEEDKIFTNLHGQQSHDLKSSKK) is disordered. Positions 16 to 25 (QSHDLKSSKK) are enriched in basic and acidic residues. Residue 54–63 (GRGGAGFSTG) coordinates NAD(+). 166-213 (GAGAYICGEETALLESLEGKKGMPRLKPPFPAGFGLYGCPTTINNVES) provides a ligand contact to FMN. Cys344, Cys347, Cys350, and Cys390 together coordinate [4Fe-4S] cluster.

Belongs to the complex I 51 kDa subunit family. Requires FMN as cofactor. The cofactor is [4Fe-4S] cluster.

It catalyses the reaction a quinone + NADH + 5 H(+)(in) = a quinol + NAD(+) + 4 H(+)(out). Functionally, NDH-1 shuttles electrons from NADH, via FMN and iron-sulfur (Fe-S) centers, to quinones in the respiratory chain. Couples the redox reaction to proton translocation (for every two electrons transferred, four hydrogen ions are translocated across the cytoplasmic membrane), and thus conserves the redox energy in a proton gradient. The protein is NADH-quinone oxidoreductase subunit F (nuoF) of Rickettsia massiliae (strain Mtu5).